A 582-amino-acid polypeptide reads, in one-letter code: Glutamine--tRNA ligase (582 aa).

Residues 50 to 60 (PEPNGYLHIGH) carry the 'HIGH' region motif. Residues 51-53 (EPN) and 57-63 (HIGHAKS) each bind ATP. The L-glutamine site is built by D83 and Y235. ATP is bound by residues T254 and 289–290 (RL). The 'KMSKS' region signature appears at 296–300 (ITSKR).

This sequence belongs to the class-I aminoacyl-tRNA synthetase family. In terms of assembly, monomer.

Its subcellular location is the cytoplasm. The catalysed reaction is tRNA(Gln) + L-glutamine + ATP = L-glutaminyl-tRNA(Gln) + AMP + diphosphate. The polypeptide is Glutamine--tRNA ligase (Cupriavidus metallidurans (strain ATCC 43123 / DSM 2839 / NBRC 102507 / CH34) (Ralstonia metallidurans)).